The chain runs to 284 residues: uncharacterized protein (284 aa).

An N-terminal signal peptide occupies residues 1 to 24 (MLYSRESRTTVLFLALVTSLTVLC). Residues 25 to 84 (HSVDVTTVFTTSTITEITTVTAAPQPQNKAETALNTATNIIQTMQFLFNCAPFKWKGPLK) are Cytoplasmic-facing. Residues 85 to 104 (ITSCALNFIVLLLTAWGYLL) traverse the membrane as a helical segment. Residues 105 to 284 (KYLQENKLNS…SVHMYSSSLL (180 aa)) are Extracellular-facing. Asn-270 carries an N-linked (GlcNAc...) asparagine glycan.

To yeast YNL019c.

It is found in the cell membrane. This is an uncharacterized protein from Saccharomyces cerevisiae (strain ATCC 204508 / S288c) (Baker's yeast).